Reading from the N-terminus, the 158-residue chain is Low molecular weight phosphotyrosine protein phosphatase (158 aa).

N-acetylalanine is present on Ala2. The Nucleophile role is filled by Cys13. Residue Arg19 is part of the active site. Residue Asp130 is the Proton donor of the active site. Residues Tyr132 and Tyr133 each carry the phosphotyrosine modification.

Belongs to the low molecular weight phosphotyrosine protein phosphatase family. Interacts with EPHA2; dephosphorylates EPHA2. Interacts with EPHB1. In terms of assembly, interacts with the SH3 domain of SPTAN1. There is no interaction observed for isoform 2. In terms of processing, phosphorylated by LCK. Phosphorylation at Tyr-132 increases its phosphatase activity. In terms of tissue distribution, widely expressed with highest levels in brain and liver and lowest levels in muscle.

It is found in the cytoplasm. The enzyme catalyses O-phospho-L-tyrosyl-[protein] + H2O = L-tyrosyl-[protein] + phosphate. It catalyses the reaction a phosphate monoester + H2O = an alcohol + phosphate. Its activity is regulated as follows. Inhibited by sulfhydryl reagents. Functionally, acts on tyrosine phosphorylated proteins, low-MW aryl phosphates and natural and synthetic acyl phosphates with differences in substrate specificity between isoform 1 and isoform 2. The protein is Low molecular weight phosphotyrosine protein phosphatase of Mus musculus (Mouse).